Reading from the N-terminus, the 422-residue chain is UPF0229 protein SO_2883 (422 aa).

The tract at residues 60-111 is disordered; sequence SEPMFHQGKGGVRDRVHPGNDQFTRGDKIDRPQGGSGGGAGKGDASDSGEGN. Over residues 70–90 the composition is skewed to basic and acidic residues; that stretch reads GVRDRVHPGNDQFTRGDKIDR.

The protein belongs to the UPF0229 family.

The sequence is that of UPF0229 protein SO_2883 from Shewanella oneidensis (strain ATCC 700550 / JCM 31522 / CIP 106686 / LMG 19005 / NCIMB 14063 / MR-1).